The primary structure comprises 625 residues: Complex I assembly factor ACAD9, mitochondrial (625 aa).

The transit peptide at methionine 1–cysteine 41 directs the protein to the mitochondrion. Position 45 is an N6-acetyllysine (lysine 45). Lysine 96 carries the post-translational modification N6-succinyllysine. The active-site Proton acceptor is glutamate 430. Threonine 482 carries the phosphothreonine modification. N6-acetyllysine; alternate is present on lysine 525. The residue at position 525 (lysine 525) is an N6-succinyllysine; alternate.

This sequence belongs to the acyl-CoA dehydrogenase family. Homodimer. Interacts with NDUFAF1 and ECSIT. Part of the mitochondrial complex I assembly/MCIA complex that comprises at least the core subunits TMEM126B, NDUFAF1, ECSIT and ACAD9 and complement subunits such as COA1 and TMEM186. Interacts with TMEM70 and TMEM242. It depends on FAD as a cofactor.

It localises to the mitochondrion inner membrane. The enzyme catalyses eicosanoyl-CoA + oxidized [electron-transfer flavoprotein] + H(+) = (2E)-eicosenoyl-CoA + reduced [electron-transfer flavoprotein]. It catalyses the reaction octadecanoyl-CoA + oxidized [electron-transfer flavoprotein] + H(+) = (2E)-octadecenoyl-CoA + reduced [electron-transfer flavoprotein]. It carries out the reaction oxidized [electron-transfer flavoprotein] + hexadecanoyl-CoA + H(+) = (2E)-hexadecenoyl-CoA + reduced [electron-transfer flavoprotein]. The catalysed reaction is decanoyl-CoA + oxidized [electron-transfer flavoprotein] + H(+) = (2E)-decenoyl-CoA + reduced [electron-transfer flavoprotein]. The enzyme catalyses nonanoyl-CoA + oxidized [electron-transfer flavoprotein] + H(+) = (2E)-nonenoyl-CoA + reduced [electron-transfer flavoprotein]. It catalyses the reaction pentadecanoyl-CoA + oxidized [electron-transfer flavoprotein] + H(+) = (2E)-pentadecenoyl-CoA + reduced [electron-transfer flavoprotein]. It carries out the reaction undecanoyl-CoA + oxidized [electron-transfer flavoprotein] + H(+) = trans-2-undecenoyl-CoA + reduced [electron-transfer flavoprotein]. The catalysed reaction is (9Z)-hexadecenoyl-CoA + oxidized [electron-transfer flavoprotein] + H(+) = (2E,9Z)-hexadecadienoyl-CoA + reduced [electron-transfer flavoprotein]. The enzyme catalyses heptadecanoyl-CoA + oxidized [electron-transfer flavoprotein] + H(+) = trans-2-heptadecenoyl-CoA + reduced [electron-transfer flavoprotein]. It catalyses the reaction (9E)-octadecenoyl-CoA + oxidized [electron-transfer flavoprotein] + H(+) = (2E,9E)-octadecadienoyl-CoA + reduced [electron-transfer flavoprotein]. It carries out the reaction oxidized [electron-transfer flavoprotein] + (9Z)-octadecenoyl-CoA + H(+) = (2E,9Z)-octadecadienoyl-CoA + reduced [electron-transfer flavoprotein]. The catalysed reaction is (9Z,12Z)-octadecadienoyl-CoA + oxidized [electron-transfer flavoprotein] + H(+) = (2E,9Z,12Z)-octadecatrienoyl-CoA + reduced [electron-transfer flavoprotein]. The enzyme catalyses (4Z,7Z,10Z,13Z,16Z,19Z)-docosahexaenoyl-CoA + oxidized [electron-transfer flavoprotein] + H(+) = (2E,4Z,7Z,10Z,13Z,16Z,19Z)-docosaheptaenoyl-CoA + reduced [electron-transfer flavoprotein]. It catalyses the reaction tetradecanoyl-CoA + oxidized [electron-transfer flavoprotein] + H(+) = (2E)-tetradecenoyl-CoA + reduced [electron-transfer flavoprotein]. As part of the MCIA complex, primarily participates in the assembly of the mitochondrial complex I and therefore plays a role in oxidative phosphorylation. This moonlighting protein also has a dehydrogenase activity toward a broad range of substrates with greater specificity for long-chain unsaturated acyl-CoAs. However, in vivo, it does not seem to play a primary role in fatty acid oxidation. In addition, the function in complex I assembly is independent of the dehydrogenase activity of the protein. In Rattus norvegicus (Rat), this protein is Complex I assembly factor ACAD9, mitochondrial.